The sequence spans 98 residues: NADH-ubiquinone oxidoreductase chain 4L (98 aa).

The next 3 membrane-spanning stretches (helical) occupy residues 2–22, 29–49, and 61–81; these read PSIS…MLIF, SLLC…LTIL, and ILLL…LVTV.

Belongs to the complex I subunit 4L family. In terms of assembly, core subunit of respiratory chain NADH dehydrogenase (Complex I) which is composed of 45 different subunits.

Its subcellular location is the mitochondrion inner membrane. The enzyme catalyses a ubiquinone + NADH + 5 H(+)(in) = a ubiquinol + NAD(+) + 4 H(+)(out). Core subunit of the mitochondrial membrane respiratory chain NADH dehydrogenase (Complex I) which catalyzes electron transfer from NADH through the respiratory chain, using ubiquinone as an electron acceptor. Part of the enzyme membrane arm which is embedded in the lipid bilayer and involved in proton translocation. The sequence is that of NADH-ubiquinone oxidoreductase chain 4L (MT-ND4L) from Eulemur mongoz (Mongoose lemur).